The chain runs to 539 residues: Hydroxylamine reductase (539 aa).

Positions 3, 6, 14, and 20 each coordinate [4Fe-4S] cluster. Residues His-232, Glu-256, Cys-300, Cys-392, Cys-420, Cys-445, Glu-480, and Lys-482 each coordinate hybrid [4Fe-2O-2S] cluster. Cys-392 carries the cysteine persulfide modification.

The protein belongs to the HCP family. [4Fe-4S] cluster serves as cofactor. The cofactor is hybrid [4Fe-2O-2S] cluster.

The protein resides in the cytoplasm. The enzyme catalyses A + NH4(+) + H2O = hydroxylamine + AH2 + H(+). Functionally, catalyzes the reduction of hydroxylamine to form NH(3) and H(2)O. This chain is Hydroxylamine reductase, found in Chlorobaculum tepidum (strain ATCC 49652 / DSM 12025 / NBRC 103806 / TLS) (Chlorobium tepidum).